We begin with the raw amino-acid sequence, 349 residues long: Magnesium-protoporphyrin IX monomethyl ester [oxidative] cyclase (349 aa).

Residues methionine 1 to histidine 22 are disordered.

The protein belongs to the AcsF family. It depends on Fe cation as a cofactor.

The enzyme catalyses Mg-protoporphyrin IX 13-monomethyl ester + 3 NADPH + 3 O2 + 2 H(+) = 3,8-divinyl protochlorophyllide a + 3 NADP(+) + 5 H2O. Its pathway is porphyrin-containing compound metabolism; chlorophyll biosynthesis (light-independent). Catalyzes the formation of the isocyclic ring in chlorophyll biosynthesis. Mediates the cyclase reaction, which results in the formation of divinylprotochlorophyllide (Pchlide) characteristic of all chlorophylls from magnesium-protoporphyrin IX 13-monomethyl ester (MgPMME). This is Magnesium-protoporphyrin IX monomethyl ester [oxidative] cyclase from Prochlorococcus marinus (strain MIT 9211).